A 297-amino-acid chain; its full sequence is 33 kDa chaperonin (297 aa).

2 disulfides stabilise this stretch: Cys-232-Cys-234 and Cys-266-Cys-269.

It belongs to the HSP33 family. Post-translationally, under oxidizing conditions two disulfide bonds are formed involving the reactive cysteines. Under reducing conditions zinc is bound to the reactive cysteines and the protein is inactive.

It is found in the cytoplasm. In terms of biological role, redox regulated molecular chaperone. Protects both thermally unfolding and oxidatively damaged proteins from irreversible aggregation. Plays an important role in the bacterial defense system toward oxidative stress. The protein is 33 kDa chaperonin of Pseudomonas paraeruginosa (strain DSM 24068 / PA7) (Pseudomonas aeruginosa (strain PA7)).